The primary structure comprises 189 residues: Movement protein (189 aa).

This sequence belongs to the tombusvirus/aureusvirus movement protein p22 family. In terms of assembly, interacts with host protein HFI22. Post-translationally, phosphorylated.

It is found in the host membrane. Its function is as follows. Transports viral genome to neighboring plant cells directly through plasmosdesmata, without any budding. The movement protein allows efficient cell to cell propagation, by bypassing the host cell wall barrier. The sequence is that of Movement protein from Capsicum annuum (Capsicum pepper).